The sequence spans 492 residues: Cysteine--tRNA ligase (492 aa).

Cys29 provides a ligand contact to Zn(2+). The 'HIGH' region signature appears at 31 to 41 (LTTSDPPHLGH). Positions 229, 254, and 258 each coordinate Zn(2+). The short motif at 286-290 (KMSSS) is the 'KMSKS' region element.

Belongs to the class-I aminoacyl-tRNA synthetase family. Zn(2+) serves as cofactor.

The protein localises to the cytoplasm. The enzyme catalyses tRNA(Cys) + L-cysteine + ATP = L-cysteinyl-tRNA(Cys) + AMP + diphosphate. The chain is Cysteine--tRNA ligase from Haloarcula marismortui (strain ATCC 43049 / DSM 3752 / JCM 8966 / VKM B-1809) (Halobacterium marismortui).